Here is a 648-residue protein sequence, read N- to C-terminus: Golgin subfamily A member 8G (648 aa).

The span at 1–11 (MWPQARLPPHP) shows a compositional bias: pro residues. 2 disordered regions span residues 1–84 (MWPQ…SATL) and 119–139 (NKQVEHQLEEEKKANNEKQKA). Positions 50-62 (TNGSIHETATSGG) are enriched in polar residues. Coiled coils occupy residues 105–160 (VSQL…LNTD), 223–275 (LEQS…MSQE), and 318–424 (EVEL…QQKQ). Over residues 121–139 (QVEHQLEEEKKANNEKQKA) the composition is skewed to basic and acidic residues. 4 disordered regions span residues 356–376 (LREQEERLQEQQERLPEQEER), 434–461 (ALPGEGDGGGHLDSEGEEAPRPIPSIPQ), 508–549 (PITK…GVAA), and 600–624 (PVQGEAREGSPHDNPTAQPIVQDHQ). A compositionally biased stretch (basic and acidic residues) spans 441 to 453 (GGGHLDSEGEEAP). The segment covering 521-534 (PGGGHHQAGPGQGG) has biased composition (gly residues).

The protein belongs to the GOLGA8 family.

In Homo sapiens (Human), this protein is Golgin subfamily A member 8G.